Reading from the N-terminus, the 409-residue chain is Elongation factor Tu (409 aa).

Residues lysine 10–glutamate 214 enclose the tr-type G domain. A G1 region spans residues glycine 19–threonine 26. Residue glycine 19–threonine 26 participates in GTP binding. Position 26 (threonine 26) interacts with Mg(2+). The G2 stretch occupies residues glycine 60–asparagine 64. The interval aspartate 81–glycine 84 is G3. GTP contacts are provided by residues aspartate 81–histidine 85 and asparagine 136–aspartate 139. The segment at asparagine 136–aspartate 139 is G4. Residues serine 174–leucine 176 are G5.

The protein belongs to the TRAFAC class translation factor GTPase superfamily. Classic translation factor GTPase family. EF-Tu/EF-1A subfamily. In terms of assembly, monomer.

The protein resides in the cytoplasm. It carries out the reaction GTP + H2O = GDP + phosphate + H(+). Its function is as follows. GTP hydrolase that promotes the GTP-dependent binding of aminoacyl-tRNA to the A-site of ribosomes during protein biosynthesis. The chain is Elongation factor Tu from Gloeobacter violaceus (strain ATCC 29082 / PCC 7421).